We begin with the raw amino-acid sequence, 284 residues long: Pantothenate synthetase (284 aa).

Residue 30-37 participates in ATP binding; it reads MGNLHDGH. H37 serves as the catalytic Proton donor. Q61 is a (R)-pantoate binding site. Q61 contributes to the beta-alanine binding site. 149-152 provides a ligand contact to ATP; sequence GEKD. Q155 is a (R)-pantoate binding site. ATP is bound by residues V178 and 186 to 189; that span reads LSSR.

Belongs to the pantothenate synthetase family. In terms of assembly, homodimer.

The protein resides in the cytoplasm. The catalysed reaction is (R)-pantoate + beta-alanine + ATP = (R)-pantothenate + AMP + diphosphate + H(+). It participates in cofactor biosynthesis; (R)-pantothenate biosynthesis; (R)-pantothenate from (R)-pantoate and beta-alanine: step 1/1. In terms of biological role, catalyzes the condensation of pantoate with beta-alanine in an ATP-dependent reaction via a pantoyl-adenylate intermediate. The polypeptide is Pantothenate synthetase (Erwinia tasmaniensis (strain DSM 17950 / CFBP 7177 / CIP 109463 / NCPPB 4357 / Et1/99)).